The following is a 348-amino-acid chain: N-formyl peptide receptor 2 (348 aa).

Residue Asn-1 is glycosylated (N-linked (GlcNAc...) asparagine). Residues 1-24 lie on the Extracellular side of the membrane; it reads NFSTPLNEHEEVSYESAGYTVLQI. The helical transmembrane segment at 25–47 threads the bilayer; that stretch reads LPLVVLGVTFVLGVLGNGLVIWV. The Cytoplasmic segment spans residues 48–58; it reads AGFRMTRTVTT. A helical transmembrane segment spans residues 59-80; it reads ICYLNLPLADFSFTATLPFLIV. At 81–97 the chain is on the extracellular side; that stretch reads SMAMGEKWPFGWFLCKL. Cys-95 and Cys-173 form a disulfide bridge. A helical membrane pass occupies residues 98–118; that stretch reads IHIVVDINLFGSVFLIGFIAL. Residues 119–137 are Cytoplasmic-facing; that stretch reads DRCICVLHPVWAQNHRTVS. The chain crosses the membrane as a helical span at residues 138–159; it reads LAMKVIIGPWILALVLTLPVFL. Residues 160 to 202 lie on the Extracellular side of the membrane; it reads FLTTVTIPNGDTYCTFNFASWGGTPEERKNVAITMLTARGIIR. A helical membrane pass occupies residues 203-223; that stretch reads FVIGFSMPMSIVAICYGLIAA. The Cytoplasmic segment spans residues 224–239; sequence KIHKKGMIKSSRPLRV. A helical transmembrane segment spans residues 240–263; sequence LTAVVASFFICWFPFQLVALLSTV. Residues 264–283 lie on the Extracellular side of the membrane; sequence WLKEMLFYGKYKIINILVNP. A helical transmembrane segment spans residues 284-303; sequence TSSLAFFNSCLNPMLYVFVG. Over 304–348 the chain is Cytoplasmic; the sequence is QDFRERLIRSLPTSLERALSEDSAPTNDTAAKCASPPAETELQAM. Positions 323 to 348 are disordered; it reads SEDSAPTNDTAAKCASPPAETELQAM.

The protein belongs to the G-protein coupled receptor 1 family. Interacts with APP; the interaction takes place at the cell surface and the complex is then rapidly internalized.

The protein localises to the cell membrane. Functionally, low affinity receptor for N-formyl-methionyl peptides, which are powerful neutrophil chemotactic factors. Binding of FMLP to the receptor causes activation of neutrophils. This response is mediated via a G-protein that activates a phosphatidylinositol-calcium second messenger system. Receptor for the chemokine-like protein FAM19A5, mediating FAM19A5-stimulated macrophage chemotaxis and the inhibitory effect on TNFSF11/RANKL-induced osteoclast differentiation. The polypeptide is N-formyl peptide receptor 2 (FPR2) (Pongo pygmaeus (Bornean orangutan)).